Reading from the N-terminus, the 385-residue chain is Succinyl-diaminopimelate desuccinylase (385 aa).

Position 78 (histidine 78) interacts with Zn(2+). The active site involves aspartate 80. Position 110 (aspartate 110) interacts with Zn(2+). Glutamate 144 (proton acceptor) is an active-site residue. Zn(2+)-binding residues include glutamate 145, glutamate 173, and histidine 358.

Belongs to the peptidase M20A family. DapE subfamily. In terms of assembly, homodimer. Zn(2+) serves as cofactor. It depends on Co(2+) as a cofactor.

It catalyses the reaction N-succinyl-(2S,6S)-2,6-diaminopimelate + H2O = (2S,6S)-2,6-diaminopimelate + succinate. The protein operates within amino-acid biosynthesis; L-lysine biosynthesis via DAP pathway; LL-2,6-diaminopimelate from (S)-tetrahydrodipicolinate (succinylase route): step 3/3. Catalyzes the hydrolysis of N-succinyl-L,L-diaminopimelic acid (SDAP), forming succinate and LL-2,6-diaminopimelate (DAP), an intermediate involved in the bacterial biosynthesis of lysine and meso-diaminopimelic acid, an essential component of bacterial cell walls. The protein is Succinyl-diaminopimelate desuccinylase of Gluconacetobacter diazotrophicus (strain ATCC 49037 / DSM 5601 / CCUG 37298 / CIP 103539 / LMG 7603 / PAl5).